Here is a 216-residue protein sequence, read N- to C-terminus: Holliday junction branch migration complex subunit RuvA (216 aa).

Residues 1–64 (MISFIKGVLI…EDAQQLYGFK (64 aa)) are domain I. Residues 65–143 (SKVDKKVFQE…KMANEIYAQT (79 aa)) form a domain II region. The flexible linker stretch occupies residues 144-163 (SGTTTTSQDSQAQQAPTSVV). A domain III region spans residues 164–216 (LANSIFNESVDALLALGYKQKDAEKMARSAMGDATTAAEVIRKALQGSIKSKR).

It belongs to the RuvA family. In terms of assembly, homotetramer. Forms an RuvA(8)-RuvB(12)-Holliday junction (HJ) complex. HJ DNA is sandwiched between 2 RuvA tetramers; dsDNA enters through RuvA and exits via RuvB. An RuvB hexamer assembles on each DNA strand where it exits the tetramer. Each RuvB hexamer is contacted by two RuvA subunits (via domain III) on 2 adjacent RuvB subunits; this complex drives branch migration. In the full resolvosome a probable DNA-RuvA(4)-RuvB(12)-RuvC(2) complex forms which resolves the HJ.

The protein resides in the cytoplasm. The RuvA-RuvB-RuvC complex processes Holliday junction (HJ) DNA during genetic recombination and DNA repair, while the RuvA-RuvB complex plays an important role in the rescue of blocked DNA replication forks via replication fork reversal (RFR). RuvA specifically binds to HJ cruciform DNA, conferring on it an open structure. The RuvB hexamer acts as an ATP-dependent pump, pulling dsDNA into and through the RuvAB complex. HJ branch migration allows RuvC to scan DNA until it finds its consensus sequence, where it cleaves and resolves the cruciform DNA. In Francisella tularensis subsp. mediasiatica (strain FSC147), this protein is Holliday junction branch migration complex subunit RuvA.